The following is a 384-amino-acid chain: Formate-dependent phosphoribosylglycinamide formyltransferase (384 aa).

N(1)-(5-phospho-beta-D-ribosyl)glycinamide is bound by residues 14-15 (EL) and Glu-74. ATP-binding positions include Arg-106, Lys-147, 152–157 (SSGKGQ), 187–190 (EEFI), and Glu-195. The 190-residue stretch at 111–300 (RLAAETLHLP…EFALHVRAVL (190 aa)) folds into the ATP-grasp domain. Positions 259 and 271 each coordinate Mg(2+). Residues Asp-278, Lys-348, and 355-356 (RR) contribute to the N(1)-(5-phospho-beta-D-ribosyl)glycinamide site.

Belongs to the PurK/PurT family. Homodimer.

The enzyme catalyses N(1)-(5-phospho-beta-D-ribosyl)glycinamide + formate + ATP = N(2)-formyl-N(1)-(5-phospho-beta-D-ribosyl)glycinamide + ADP + phosphate + H(+). The protein operates within purine metabolism; IMP biosynthesis via de novo pathway; N(2)-formyl-N(1)-(5-phospho-D-ribosyl)glycinamide from N(1)-(5-phospho-D-ribosyl)glycinamide (formate route): step 1/1. Involved in the de novo purine biosynthesis. Catalyzes the transfer of formate to 5-phospho-ribosyl-glycinamide (GAR), producing 5-phospho-ribosyl-N-formylglycinamide (FGAR). Formate is provided by PurU via hydrolysis of 10-formyl-tetrahydrofolate. The sequence is that of Formate-dependent phosphoribosylglycinamide formyltransferase from Bacillus velezensis (strain DSM 23117 / BGSC 10A6 / LMG 26770 / FZB42) (Bacillus amyloliquefaciens subsp. plantarum).